The chain runs to 152 residues: Phosphoribosyl-AMP cyclohydrolase (152 aa).

Aspartate 92 provides a ligand contact to Mg(2+). A Zn(2+)-binding site is contributed by cysteine 93. Mg(2+)-binding residues include aspartate 94 and aspartate 96. Zn(2+)-binding residues include cysteine 111 and cysteine 118.

It belongs to the PRA-CH family. As to quaternary structure, homodimer. Requires Mg(2+) as cofactor. Zn(2+) serves as cofactor.

The protein resides in the cytoplasm. It catalyses the reaction 1-(5-phospho-beta-D-ribosyl)-5'-AMP + H2O = 1-(5-phospho-beta-D-ribosyl)-5-[(5-phospho-beta-D-ribosylamino)methylideneamino]imidazole-4-carboxamide. The protein operates within amino-acid biosynthesis; L-histidine biosynthesis; L-histidine from 5-phospho-alpha-D-ribose 1-diphosphate: step 3/9. Its function is as follows. Catalyzes the hydrolysis of the adenine ring of phosphoribosyl-AMP. The chain is Phosphoribosyl-AMP cyclohydrolase from Sinorhizobium fredii (strain NBRC 101917 / NGR234).